The following is a 520-amino-acid chain: GMP synthase [glutamine-hydrolyzing] (520 aa).

One can recognise a Glutamine amidotransferase type-1 domain in the interval 8–202 (RLLIIDFGSQ…FVRLAGFTGD (195 aa)). The Nucleophile role is filled by C86. Residues H177 and E179 contribute to the active site. Positions 203–395 (WTMDAYREQA…LGLPASFIGR (193 aa)) constitute a GMPS ATP-PPase domain. 230 to 236 (SGGVDSS) contacts ATP.

As to quaternary structure, homodimer.

The catalysed reaction is XMP + L-glutamine + ATP + H2O = GMP + L-glutamate + AMP + diphosphate + 2 H(+). Its pathway is purine metabolism; GMP biosynthesis; GMP from XMP (L-Gln route): step 1/1. In terms of biological role, catalyzes the synthesis of GMP from XMP. In Dinoroseobacter shibae (strain DSM 16493 / NCIMB 14021 / DFL 12), this protein is GMP synthase [glutamine-hydrolyzing].